The chain runs to 431 residues: Adenylosuccinate synthetase (431 aa).

GTP contacts are provided by residues 13–19 and 41–43; these read GDEGKGK and GHT. Aspartate 14 serves as the catalytic Proton acceptor. Positions 14 and 41 each coordinate Mg(2+). IMP-binding positions include 14 to 17, 39 to 42, threonine 130, arginine 144, glutamine 225, threonine 240, and arginine 304; these read DEGK and NAGH. The Proton donor role is filled by histidine 42. Substrate is bound at residue 300–306; it reads AVTGRPR. Residues arginine 306, 332-334, and 415-417 each bind GTP; these read KLD and STG.

Belongs to the adenylosuccinate synthetase family. As to quaternary structure, homodimer. The cofactor is Mg(2+).

It localises to the cytoplasm. It catalyses the reaction IMP + L-aspartate + GTP = N(6)-(1,2-dicarboxyethyl)-AMP + GDP + phosphate + 2 H(+). Its pathway is purine metabolism; AMP biosynthesis via de novo pathway; AMP from IMP: step 1/2. Its function is as follows. Plays an important role in the de novo pathway of purine nucleotide biosynthesis. Catalyzes the first committed step in the biosynthesis of AMP from IMP. This chain is Adenylosuccinate synthetase, found in Legionella pneumophila (strain Paris).